The primary structure comprises 555 residues: Branched-chain-amino-acid aminotransferase-like protein 1 (555 aa).

The protein belongs to the class-IV pyridoxal-phosphate-dependent aminotransferase family.

The protein is Branched-chain-amino-acid aminotransferase-like protein 1 of Arabidopsis thaliana (Mouse-ear cress).